A 118-amino-acid chain; its full sequence is Large ribosomal subunit protein bL19 (118 aa).

The protein belongs to the bacterial ribosomal protein bL19 family.

Functionally, this protein is located at the 30S-50S ribosomal subunit interface and may play a role in the structure and function of the aminoacyl-tRNA binding site. In Dictyoglomus thermophilum (strain ATCC 35947 / DSM 3960 / H-6-12), this protein is Large ribosomal subunit protein bL19.